Consider the following 141-residue polypeptide: Large ribosomal subunit protein uL11 (141 aa).

Belongs to the universal ribosomal protein uL11 family. In terms of assembly, part of the ribosomal stalk of the 50S ribosomal subunit. Interacts with L10 and the large rRNA to form the base of the stalk. L10 forms an elongated spine to which L12 dimers bind in a sequential fashion forming a multimeric L10(L12)X complex. Post-translationally, one or more lysine residues are methylated.

In terms of biological role, forms part of the ribosomal stalk which helps the ribosome interact with GTP-bound translation factors. The chain is Large ribosomal subunit protein uL11 from Streptococcus suis (strain 05ZYH33).